A 108-amino-acid polypeptide reads, in one-letter code: UPF0060 membrane protein YnfA (108 aa).

Topologically, residues 1-5 (MLKTT) are periplasmic. A helical membrane pass occupies residues 6–26 (LLFFVTALCEIIGCFLPWLWL). The Cytoplasmic portion of the chain corresponds to 27–30 (KRGA). A helical transmembrane segment spans residues 31-51 (SVWWLLPAAASLALFVWLLTL). Over 52–60 (HPAASGRVY) the chain is Periplasmic. Residues 61-81 (AAYGGVYVCTALLWLRVVDGV) traverse the membrane as a helical segment. The Cytoplasmic portion of the chain corresponds to 82-84 (RLT). The helical transmembrane segment at 85–105 (VYDWCGALIALCGMLIIVVGW) threads the bilayer. At 106–108 (GRT) the chain is on the periplasmic side.

The protein belongs to the UPF0060 family.

Its subcellular location is the cell inner membrane. The chain is UPF0060 membrane protein YnfA from Salmonella agona (strain SL483).